A 462-amino-acid chain; its full sequence is MAVATHCFTSPCHDRIRFFSSDDGIGRLGITRKRINGTFLLKILPPIQSADLRTTGGRSSRPLSAFRSGFSKGIFDIVPLPSKNELKELTAPLLLKLVGVLACAFLIVPSADAVDALKTCACLLKGCRIELAKCIANPACAANVACLQTCNNRPDETECQIKCGDLFENSVVDEFNECAVSRKKCVPRKSDLGEFPAPDPSVLVQNFNISDFNGKWYITSGLNPTFDAFDCQLHEFHTEGDNKLVGNISWRIKTLDSGFFTRSAVQKFVQDPNQPGVLYNHDNEYLHYQDDWYILSSKIENKPEDYIFVYYRGRNDAWDGYGGAVVYTRSSVLPNSIIPELEKAAKSIGRDFSTFIRTDNTCGPEPALVERIEKTVEEGERIIVKEVEEIEEEVEKEVEKVGRTEMTLFQRLAEGFNELKQDEENFVRELSKEEMEFLDEIKMEASEVEKLFGKALPIRKVR.

A disulfide bridge connects residues cysteine 231 and cysteine 362. Positions 372-437 (IEKTVEEGER…RELSKEEMEF (66 aa)) form a coiled coil. An involved in the binding to the thylakoid membrane region spans residues 380 to 391 (ERIIVKEVEEIE).

The protein belongs to the calycin superfamily. Lipocalin family. As to quaternary structure, interacts in vitro with LTO1.

The protein localises to the plastid. Its subcellular location is the chloroplast thylakoid membrane. It carries out the reaction all-trans-violaxanthin + 2 L-ascorbate = all-trans-zeaxanthin + 2 L-dehydroascorbate + 2 H2O. Activity limited by low ascorbate availability. Feedback inhibition by zeaxanthin. Requires the presence of micelle-forming lipids such as monogalactosyldiacylglyceride (MGDG). Low concentration of bilayer forming lipids, such as digalactosyldiacylglyceride (DGDG) or phosphatidylcholine, supports a slower but nearly complete activity. 80% of the specific activity in lumenal chloroplast fractions is lost in vitro in the presence of reduced thioredoxin. Functionally, part of the xanthophyll (or violaxanthin) cycle for controlling the concentration of zeaxanthin in chloroplasts. Catalyzes the two-step mono de-epoxidation reaction. Stereospecific for all-trans xanthophylls. Zeaxanthin induces the dissipation of excitation energy in the chlorophyll of the light-harvesting protein complex of photosystem II. This chain is Violaxanthin de-epoxidase, chloroplastic, found in Arabidopsis thaliana (Mouse-ear cress).